Reading from the N-terminus, the 226-residue chain is Deoxyribose-phosphate aldolase (226 aa).

Asp-94 acts as the Proton donor/acceptor in catalysis. The active-site Schiff-base intermediate with acetaldehyde is the Lys-156. Lys-185 functions as the Proton donor/acceptor in the catalytic mechanism.

Belongs to the DeoC/FbaB aldolase family. DeoC type 1 subfamily.

The protein localises to the cytoplasm. It carries out the reaction 2-deoxy-D-ribose 5-phosphate = D-glyceraldehyde 3-phosphate + acetaldehyde. It functions in the pathway carbohydrate degradation; 2-deoxy-D-ribose 1-phosphate degradation; D-glyceraldehyde 3-phosphate and acetaldehyde from 2-deoxy-alpha-D-ribose 1-phosphate: step 2/2. Its function is as follows. Catalyzes a reversible aldol reaction between acetaldehyde and D-glyceraldehyde 3-phosphate to generate 2-deoxy-D-ribose 5-phosphate. In Burkholderia lata (strain ATCC 17760 / DSM 23089 / LMG 22485 / NCIMB 9086 / R18194 / 383), this protein is Deoxyribose-phosphate aldolase.